The chain runs to 616 residues: UPF0329 protein ECU02_1540 (616 aa).

2 stretches are compositionally biased toward basic and acidic residues: residues 350-359 and 369-381; these read EREKREESKG and GAGE…KEED. A disordered region spans residues 350–427; sequence EREKREESKG…RKGDGHHYKI (78 aa). Residues 382 to 396 are compositionally biased toward acidic residues; sequence GKEEEGVEAEEEESA. The span at 408-427 shows a compositional bias: basic residues; sequence ARRKKSLKGKRKGDGHHYKI.

The protein belongs to the UPF0329 family.

This chain is UPF0329 protein ECU02_1540, found in Encephalitozoon cuniculi (strain GB-M1) (Microsporidian parasite).